Reading from the N-terminus, the 125-residue chain is Fluoride-specific ion channel FluC (125 aa).

4 consecutive transmembrane segments (helical) span residues 5 to 25 (LLVA…GALV), 29 to 49 (LGAG…FLIG), 66 to 86 (LFLA…SYET), and 95 to 115 (VGKA…LAFL). Residues Gly-74 and Thr-77 each contribute to the Na(+) site.

This sequence belongs to the fluoride channel Fluc/FEX (TC 1.A.43) family.

The protein resides in the cell inner membrane. The enzyme catalyses fluoride(in) = fluoride(out). Na(+) is not transported, but it plays an essential structural role and its presence is essential for fluoride channel function. Fluoride-specific ion channel. Important for reducing fluoride concentration in the cell, thus reducing its toxicity. This chain is Fluoride-specific ion channel FluC, found in Thermus thermophilus (strain ATCC 27634 / DSM 579 / HB8).